The following is a 98-amino-acid chain: uncharacterized protein (98 aa).

The signal sequence occupies residues 1 to 23 (MKKMQSIVLALSLVLVAPMAAQA). Residues 68–98 (WHLHGPPPPPRHHKKAPHDHHGGHGPGKHHR) are disordered. Residues 77–98 (PRHHKKAPHDHHGGHGPGKHHR) show a composition bias toward basic residues.

This sequence to E.coli YpeC.

This is an uncharacterized protein from Escherichia coli (strain K12).